The primary structure comprises 113 residues: Pro-corazonin (113 aa).

Positions 1 to 19 (MATNITMFLIVITLTSVAA) are cleaved as a signal peptide. The residue at position 20 (Q20) is a Pyrrolidone carboxylic acid. N30 carries the asparagine amide modification. A disordered region spans residues 74–96 (LGPCDTSKTRSTTNPSDTNTSAV). Residues 82 to 96 (TRSTTNPSDTNTSAV) are compositionally biased toward polar residues.

It belongs to the corazonin family. Four pairs of lateral neurosecretory cells in the brains of late instar larvae, pupae and adults.

It is found in the secreted. Cardioactive peptide. Corazonin is probably involved in the physiological regulation of the heart beat. The chain is Pro-corazonin from Galleria mellonella (Greater wax moth).